Here is a 409-residue protein sequence, read N- to C-terminus: Putative actin-fragmin kinase DDB_G0268812 (409 aa).

Residues 1 to 45 (MKTFRDFKKKIKNNNNNKNNKNNNINNNNSNNNKNNKNNNNNNSN) are disordered. Residues 5-46 (RDFKKKIKNNNNNKNNKNNNINNNNSNNNKNNKNNNNNNSNN) adopt a coiled-coil conformation. A compositionally biased stretch (low complexity) spans 13–45 (NNNNNKNNKNNNINNNNSNNNKNNKNNNNNNSN).

This sequence belongs to the protein kinase superfamily. AFK Ser/Thr protein kinase family.

This chain is Putative actin-fragmin kinase DDB_G0268812, found in Dictyostelium discoideum (Social amoeba).